Consider the following 458-residue polypeptide: MALWGGRFTQAADQRFKQFNDSLRFDYRLAEQDIVGSVAWSKALVTVGVLTADEQRQLEEALNVLLEEVRANPQQILQSDAEDIHSWVEGKLIDKVGQLGKKLHTGRSRNDQVATDLKLWCKETVRELLTANRQLQSALVETAQANQDAVMPGYTHLQRAQPVTFAHWCLAYVEMLARDESRLQDTLKRLDVSPLGCGALAGTAYEIDREQLAGWLGFASATRNSLDSVSDRDHVLELLSDAAIGMVHLSRFAEDLIFFNSGEAGFVELSDRVTSGSSLMPQKKNPDALELIRGKCGRVQGALTGMMMTLKGLPLAYNKDMQEDKEGLFDALDTWLDCLHMAALVLDGIQVKRPRCQDAAQQGYANATELADYLVAKGVPFREAHHIVGEAVVEAIRQGKPLEALPLADLQKFSHVIGDDVYPMLSLQSCLDKRAAKGGVSPQQVAQAINDAKARLAL.

The protein belongs to the lyase 1 family. Argininosuccinate lyase subfamily.

It is found in the cytoplasm. It carries out the reaction 2-(N(omega)-L-arginino)succinate = fumarate + L-arginine. It participates in amino-acid biosynthesis; L-arginine biosynthesis; L-arginine from L-ornithine and carbamoyl phosphate: step 3/3. This Salmonella heidelberg (strain SL476) protein is Argininosuccinate lyase.